The following is a 160-amino-acid chain: Phosphopantetheine adenylyltransferase (160 aa).

Residue S8 participates in substrate binding. Residues 8–9 (SF) and H16 each bind ATP. Residues K40, T72, and R86 each contribute to the substrate site. ATP is bound by residues 87-89 (GLR), E97, and 122-128 (YSFLSSS).

This sequence belongs to the bacterial CoaD family. Homohexamer. Mg(2+) is required as a cofactor.

It is found in the cytoplasm. The catalysed reaction is (R)-4'-phosphopantetheine + ATP + H(+) = 3'-dephospho-CoA + diphosphate. Its pathway is cofactor biosynthesis; coenzyme A biosynthesis; CoA from (R)-pantothenate: step 4/5. In terms of biological role, reversibly transfers an adenylyl group from ATP to 4'-phosphopantetheine, yielding dephospho-CoA (dPCoA) and pyrophosphate. In Synechococcus sp. (strain CC9311), this protein is Phosphopantetheine adenylyltransferase.